Consider the following 191-residue polypeptide: Adenylate kinase (191 aa).

Glycine 11–threonine 16 serves as a coordination point for ATP. Residues serine 31–leucine 60 form an NMP region. Residues threonine 32, arginine 37, glutamine 58–leucine 60, glycine 86–arginine 89, and glutamine 93 each bind AMP. The interval lysine 127–aspartate 137 is LID. Position 128 (arginine 128) interacts with ATP. 2 residues coordinate AMP: arginine 134 and arginine 145. Asparagine 173 is a binding site for ATP.

The protein belongs to the adenylate kinase family. In terms of assembly, monomer.

The protein resides in the cytoplasm. It catalyses the reaction AMP + ATP = 2 ADP. It functions in the pathway purine metabolism; AMP biosynthesis via salvage pathway; AMP from ADP: step 1/1. Its function is as follows. Catalyzes the reversible transfer of the terminal phosphate group between ATP and AMP. Plays an important role in cellular energy homeostasis and in adenine nucleotide metabolism. This is Adenylate kinase from Azobacteroides pseudotrichonymphae genomovar. CFP2.